A 60-amino-acid polypeptide reads, in one-letter code: MSLEDRAKATGKNIEGKAQEALGNVTGDPEDKAEGKAKQAESEVRHGVEDVKDNVKKKID.

Composition is skewed to basic and acidic residues over residues 1–18 (MSLE…EGKA) and 29–60 (PEDK…KKID). The segment at 1-60 (MSLEDRAKATGKNIEGKAQEALGNVTGDPEDKAEGKAKQAESEVRHGVEDVKDNVKKKID) is disordered.

The protein belongs to the UPF0337 (CsbD) family.

The polypeptide is UPF0337 protein asr1134 (Nostoc sp. (strain PCC 7120 / SAG 25.82 / UTEX 2576)).